Here is a 145-residue protein sequence, read N- to C-terminus: Cell wall teichoic acid glycosylation protein GtcA (145 aa).

Helical transmembrane passes span 21–41, 52–69, 96–116, and 121–141; these read ILMYLIMGGFTTLINIVTFWL, IANTIAWVASVLFAYFSN, FLTYLVDILVMILLIEVLSIN, and KIWTNVIVLVLNYVFSKWIIF.

This sequence belongs to the GtrA family.

It localises to the cell membrane. Involved in the decoration of cell wall teichoic acid with galactose and glucose. The protein is Cell wall teichoic acid glycosylation protein GtcA (gtcA) of Listeria monocytogenes serovar 1/2a (strain ATCC BAA-679 / EGD-e).